The primary structure comprises 132 residues: Small ribosomal subunit protein uS8 (132 aa).

Belongs to the universal ribosomal protein uS8 family. As to quaternary structure, part of the 30S ribosomal subunit. Contacts proteins S5 and S12.

In terms of biological role, one of the primary rRNA binding proteins, it binds directly to 16S rRNA central domain where it helps coordinate assembly of the platform of the 30S subunit. In Gluconobacter oxydans (strain 621H) (Gluconobacter suboxydans), this protein is Small ribosomal subunit protein uS8.